The sequence spans 241 residues: Chaperone protein FimC (241 aa).

The N-terminal stretch at 1–36 (MSNKNVNVRKSQEITFCLLAGILMFMAMVVAGRAEA) is a signal peptide.

The protein belongs to the periplasmic pilus chaperone family.

It localises to the periplasm. Required for the biogenesis of type 1 fimbriae. Binds and interact with FimH. In Escherichia coli O6:H1 (strain CFT073 / ATCC 700928 / UPEC), this protein is Chaperone protein FimC (fimC).